Reading from the N-terminus, the 469-residue chain is COP9 signalosome complex subunit 5 (469 aa).

The MPN domain maps to 63 to 200 (TYISSLALCK…IGAFRTFPDN (138 aa)). Zn(2+) contacts are provided by His146, His148, and Asp159. Positions 146 to 159 (HSHPGYGCWLSGID) match the JAMM motif motif. Disordered stretches follow at residues 201–220 (YKSP…PPSK) and 331–404 (YDSF…KRPM). Residues 344–353 (DEMDDESDLD) are compositionally biased toward acidic residues.

The protein belongs to the peptidase M67A family. CSN5 subfamily. In terms of assembly, component of the COP9 signalosome (CSN) complex.

It is found in the cytoplasm. The protein resides in the nucleus. In terms of biological role, catalytic Component of the COP9 signalosome (CSN) complex that acts as an regulator of the ubiquitin (Ubl) conjugation pathway by mediating the deneddylation of the cullin subunit of SCF-type E3 ubiquitin-protein ligase complexes. The CSN complex is involved in the regulation of the mating pheromone response. This is COP9 signalosome complex subunit 5 (RRI1) from Debaryomyces hansenii (strain ATCC 36239 / CBS 767 / BCRC 21394 / JCM 1990 / NBRC 0083 / IGC 2968) (Yeast).